A 291-amino-acid polypeptide reads, in one-letter code: Gamma-soluble NSF attachment protein (291 aa).

It belongs to the SNAP family.

The protein resides in the membrane. In terms of biological role, required for vesicular transport between the endoplasmic reticulum and the Golgi apparatus. Binds to SNARE complex and then recruits NSF to disassemble it. The sequence is that of Gamma-soluble NSF attachment protein (GSNAP) from Arabidopsis thaliana (Mouse-ear cress).